The primary structure comprises 456 residues: Hydroxymethylglutaryl-CoA synthase ERG13 (456 aa).

Alanine 35 contributes to the (3S)-3-hydroxy-3-methylglutaryl-CoA binding site. The Proton donor/acceptor role is filled by glutamate 86. Residues cysteine 118, asparagine 156, threonine 160, serine 210, histidine 259, lysine 268, asparagine 336, and serine 370 each coordinate (3S)-3-hydroxy-3-methylglutaryl-CoA. Cysteine 118 functions as the Acyl-thioester intermediate in the catalytic mechanism. Histidine 259 serves as the catalytic Proton donor/acceptor.

It belongs to the thiolase-like superfamily. HMG-CoA synthase family.

The catalysed reaction is acetoacetyl-CoA + acetyl-CoA + H2O = (3S)-3-hydroxy-3-methylglutaryl-CoA + CoA + H(+). Its pathway is metabolic intermediate biosynthesis; (R)-mevalonate biosynthesis; (R)-mevalonate from acetyl-CoA: step 2/3. In terms of biological role, hydroxymethylglutaryl-CoA synthase; part of the first module of ergosterol biosynthesis pathway that includes the early steps of the pathway, conserved across all eukaryotes, and which results in the formation of mevalonate from acetyl-coenzyme A (acetyl-CoA). ERG13 condenses acetyl-CoA with acetoacetyl-CoA to form hydroxymethylglutaryl-CoA (HMG-CoA). The first module starts with the action of the cytosolic acetyl-CoA acetyltransferase ERG10B that catalyzes the formation of acetoacetyl-CoA. The hydroxymethylglutaryl-CoA synthases ERG13 then condenses acetyl-CoA with acetoacetyl-CoA to form HMG-CoA. The rate-limiting step of the early module is the reduction to mevalonate by the 3-hydroxy-3-methylglutaryl-coenzyme A (HMG-CoA) reductases HMG1. This chain is Hydroxymethylglutaryl-CoA synthase ERG13, found in Gibberella zeae (strain ATCC MYA-4620 / CBS 123657 / FGSC 9075 / NRRL 31084 / PH-1) (Wheat head blight fungus).